The sequence spans 131 residues: Small ribosomal subunit protein uS8 (131 aa).

The protein belongs to the universal ribosomal protein uS8 family. In terms of assembly, part of the 30S ribosomal subunit. Contacts proteins S5 and S12.

Its function is as follows. One of the primary rRNA binding proteins, it binds directly to 16S rRNA central domain where it helps coordinate assembly of the platform of the 30S subunit. This is Small ribosomal subunit protein uS8 from Variovorax paradoxus (strain S110).